Reading from the N-terminus, the 378-residue chain is Succinyl-diaminopimelate desuccinylase (378 aa).

His-68 serves as a coordination point for Zn(2+). The active site involves Asp-70. Asp-101 provides a ligand contact to Zn(2+). The active-site Proton acceptor is the Glu-135. 3 residues coordinate Zn(2+): Glu-136, Glu-164, and His-350.

It belongs to the peptidase M20A family. DapE subfamily. As to quaternary structure, homodimer. The cofactor is Zn(2+). Co(2+) serves as cofactor.

The catalysed reaction is N-succinyl-(2S,6S)-2,6-diaminopimelate + H2O = (2S,6S)-2,6-diaminopimelate + succinate. It participates in amino-acid biosynthesis; L-lysine biosynthesis via DAP pathway; LL-2,6-diaminopimelate from (S)-tetrahydrodipicolinate (succinylase route): step 3/3. Functionally, catalyzes the hydrolysis of N-succinyl-L,L-diaminopimelic acid (SDAP), forming succinate and LL-2,6-diaminopimelate (DAP), an intermediate involved in the bacterial biosynthesis of lysine and meso-diaminopimelic acid, an essential component of bacterial cell walls. The polypeptide is Succinyl-diaminopimelate desuccinylase (Vibrio campbellii (strain ATCC BAA-1116)).